The primary structure comprises 361 residues: Phospho-N-acetylmuramoyl-pentapeptide-transferase (361 aa).

10 helical membrane passes run 27–47, 72–92, 98–118, 135–155, 169–189, 200–220, 240–260, 263–283, 289–309, and 338–358; these read GAFF…INLL, TPTM…LLWA, YVWL…MDDF, LAMG…LHPE, TLIN…AGSA, GLAI…AYAV, IFVF…YNAP, AVFM…AIAV, IVLV…IIQV, and QIVI…LATL.

Belongs to the glycosyltransferase 4 family. MraY subfamily. The cofactor is Mg(2+).

The protein localises to the cell inner membrane. The catalysed reaction is UDP-N-acetyl-alpha-D-muramoyl-L-alanyl-gamma-D-glutamyl-meso-2,6-diaminopimeloyl-D-alanyl-D-alanine + di-trans,octa-cis-undecaprenyl phosphate = di-trans,octa-cis-undecaprenyl diphospho-N-acetyl-alpha-D-muramoyl-L-alanyl-D-glutamyl-meso-2,6-diaminopimeloyl-D-alanyl-D-alanine + UMP. The protein operates within cell wall biogenesis; peptidoglycan biosynthesis. In terms of biological role, catalyzes the initial step of the lipid cycle reactions in the biosynthesis of the cell wall peptidoglycan: transfers peptidoglycan precursor phospho-MurNAc-pentapeptide from UDP-MurNAc-pentapeptide onto the lipid carrier undecaprenyl phosphate, yielding undecaprenyl-pyrophosphoryl-MurNAc-pentapeptide, known as lipid I. The polypeptide is Phospho-N-acetylmuramoyl-pentapeptide-transferase (Dinoroseobacter shibae (strain DSM 16493 / NCIMB 14021 / DFL 12)).